A 619-amino-acid chain; its full sequence is Chaperone protein DnaK (619 aa).

A Phosphothreonine; by autocatalysis modification is found at threonine 179. The interval 584–619 (QAKAQGAAGPQPGAQAQGQPNDGGKEDVVEAEVVDK) is disordered. Positions 585–605 (AKAQGAAGPQPGAQAQGQPND) are enriched in low complexity. A compositionally biased stretch (basic and acidic residues) spans 606–619 (GGKEDVVEAEVVDK).

This sequence belongs to the heat shock protein 70 family.

Acts as a chaperone. This chain is Chaperone protein DnaK, found in Elusimicrobium minutum (strain Pei191).